The primary structure comprises 180 residues: Flavodoxin 2 (180 aa).

The 170-residue stretch at 4–173 (IGLFFGSNTG…RVAAWLAQIA (170 aa)) folds into the Flavodoxin-like domain. Residues 10 to 15 (SNTGKT), Thr57, Gly61, Asp99, 106 to 108 (NYL), and Asp155 each bind FMN.

FMN serves as cofactor.

Functionally, flavodoxins are low-potential electron donors to a number of redox enzymes. NifF is the electron donor to nitrogenase, and is thus implicated in nitrogen fixation. Does not function as an electron donor to nitrite reductase. This Azotobacter vinelandii protein is Flavodoxin 2.